Reading from the N-terminus, the 69-residue chain is Large ribosomal subunit protein uL29 (69 aa).

It belongs to the universal ribosomal protein uL29 family.

The polypeptide is Large ribosomal subunit protein uL29 (Staphylococcus saprophyticus subsp. saprophyticus (strain ATCC 15305 / DSM 20229 / NCIMB 8711 / NCTC 7292 / S-41)).